A 264-amino-acid chain; its full sequence is Thymidylate synthase 2 (264 aa).

A dUMP-binding site is contributed by arginine 21. Histidine 51 serves as a coordination point for (6R)-5,10-methylene-5,6,7,8-tetrahydrofolate. A dUMP-binding site is contributed by 126-127 (RR). Cysteine 146 functions as the Nucleophile in the catalytic mechanism. Residues 166–169 (RSAD), asparagine 177, and 207–209 (HIY) contribute to the dUMP site. Position 169 (aspartate 169) interacts with (6R)-5,10-methylene-5,6,7,8-tetrahydrofolate. (6R)-5,10-methylene-5,6,7,8-tetrahydrofolate is bound at residue serine 263.

Belongs to the thymidylate synthase family. Bacterial-type ThyA subfamily. In terms of assembly, homodimer.

Its subcellular location is the cytoplasm. The enzyme catalyses dUMP + (6R)-5,10-methylene-5,6,7,8-tetrahydrofolate = 7,8-dihydrofolate + dTMP. It participates in pyrimidine metabolism; dTTP biosynthesis. Functionally, catalyzes the reductive methylation of 2'-deoxyuridine-5'-monophosphate (dUMP) to 2'-deoxythymidine-5'-monophosphate (dTMP) while utilizing 5,10-methylenetetrahydrofolate (mTHF) as the methyl donor and reductant in the reaction, yielding dihydrofolate (DHF) as a by-product. This enzymatic reaction provides an intracellular de novo source of dTMP, an essential precursor for DNA biosynthesis. The protein is Thymidylate synthase 2 of Bacillus amyloliquefaciens (Bacillus velezensis).